The following is a 380-amino-acid chain: Tubulin-like protein CetZ (380 aa).

GTP contacts are provided by residues 10–14, 103–105, E136, N163, and N181; these read QCGTK and GTG. The segment at 359–380 is disordered; sequence PSLEATGSDDPEGFAEYREVSR.

Belongs to the CetZ family.

The protein localises to the cytoplasm. Its function is as follows. Involved in cell shape control. The sequence is that of Tubulin-like protein CetZ from Thermococcus kodakarensis (strain ATCC BAA-918 / JCM 12380 / KOD1) (Pyrococcus kodakaraensis (strain KOD1)).